Here is a 471-residue protein sequence, read N- to C-terminus: Secretogranin-3 (471 aa).

The first 22 residues, 1-22, serve as a signal peptide directing secretion; the sequence is MGFLWTGSWILVLVLNSGPIQA. Disordered regions lie at residues 24-73, 92-145, 208-231, and 345-405; these read PKPE…SNFS, KAKQ…HQLD, ANNY…KIPE, and KLEK…DEAK. Residues 28 to 45 are compositionally biased toward basic and acidic residues; the sequence is GSQDKSLHNRELSAERPL. At serine 40 the chain carries Phosphoserine. Serine 40 carries an O-linked (Xyl...) (chondroitin sulfate) serine glycan. Residues 62 to 73 are compositionally biased toward low complexity; sequence PSESKPSESNFS. Basic and acidic residues-rich tracts occupy residues 106–142, 214–231, 345–355, and 363–405; these read LNVD…DGLH, APEK…KIPE, KLEKNTTDSKS, and EKSH…DEAK. Phosphoserine is present on serine 365.

Interacts with CHGA. Interacts with secretogranin II/SCG2. Interacts (via C-terminus) with CPE. In terms of tissue distribution, expression restricted to the brain and pituitary gland. Not detected in the adrenal gland.

Its subcellular location is the cytoplasmic vesicle. It localises to the secretory vesicle. It is found in the secretory vesicle membrane. The protein localises to the secreted. Member of the granin protein family that regulates the biogenesis of secretory granules. Acts as a sorting receptor for intragranular proteins including chromogranin A/CHGA. May also play a role in angiogenesis. Promotes endothelial proliferation, migration and tube formation through MEK/ERK signaling pathway. The polypeptide is Secretogranin-3 (Scg3) (Rattus norvegicus (Rat)).